Reading from the N-terminus, the 404-residue chain is Druantia protein DruA (404 aa).

The protein localises to the cytoplasm. Component of antiviral defense system Druantia type I, composed of DruA, DruB, DruC, DruD and DruE. Expression of Druantia in E.coli (strain MG1655) confers resistance to phage lambda, SECphi18, SECphi27 and T4. The sequence is that of Druantia protein DruA from Escherichia coli (strain UMEA 4076-1).